A 559-amino-acid polypeptide reads, in one-letter code: 2,3-bisphosphoglycerate-independent phosphoglycerate mutase (559 aa).

Mn(2+)-binding residues include D28 and S81. Catalysis depends on S81, which acts as the Phosphoserine intermediate. Substrate is bound by residues H140, 170–171, R206, R213, 286–289, and K361; these read RD and RADR. Mn(2+) is bound by residues D430, H434, D471, H472, and H501.

The protein belongs to the BPG-independent phosphoglycerate mutase family. In terms of assembly, monomer. Mn(2+) is required as a cofactor. The N-terminus is blocked. Found ubiquitously in germinating seed.

Its subcellular location is the cytoplasm. It catalyses the reaction (2R)-2-phosphoglycerate = (2R)-3-phosphoglycerate. Its pathway is carbohydrate degradation; glycolysis; pyruvate from D-glyceraldehyde 3-phosphate: step 3/5. Catalyzes the interconversion of 2-phosphoglycerate and 3-phosphoglycerate. In Zea mays (Maize), this protein is 2,3-bisphosphoglycerate-independent phosphoglycerate mutase.